A 382-amino-acid polypeptide reads, in one-letter code: S-adenosylmethionine synthase (382 aa).

ATP is bound at residue His16. Mg(2+) is bound at residue Asp18. K(+) is bound at residue Glu44. Residues Glu57 and Gln100 each contribute to the L-methionine site. Residues 100-110 (QSPDIAQGVDN) are flexible loop. ATP-binding positions include 165 to 167 (DAK), 231 to 232 (RF), Asp240, 246 to 247 (RK), and Lys267. Asp240 contacts L-methionine. Lys271 serves as a coordination point for L-methionine.

This sequence belongs to the AdoMet synthase family. As to quaternary structure, homotetramer; dimer of dimers. Mg(2+) is required as a cofactor. The cofactor is K(+).

Its subcellular location is the cytoplasm. It carries out the reaction L-methionine + ATP + H2O = S-adenosyl-L-methionine + phosphate + diphosphate. It participates in amino-acid biosynthesis; S-adenosyl-L-methionine biosynthesis; S-adenosyl-L-methionine from L-methionine: step 1/1. Its function is as follows. Catalyzes the formation of S-adenosylmethionine (AdoMet) from methionine and ATP. The overall synthetic reaction is composed of two sequential steps, AdoMet formation and the subsequent tripolyphosphate hydrolysis which occurs prior to release of AdoMet from the enzyme. The chain is S-adenosylmethionine synthase from Legionella pneumophila (strain Lens).